Here is a 406-residue protein sequence, read N- to C-terminus: Enoyl-[acyl-carrier-protein] reductase [NADH] (406 aa).

NAD(+) contacts are provided by residues 48–53 (GASTGF), 74–75 (FE), 111–112 (DA), and 140–141 (IA). Tyr226 lines the substrate pocket. Tyr236 functions as the Proton donor in the catalytic mechanism. Residues Lys245 and 275 to 277 (LVT) contribute to the NAD(+) site.

This sequence belongs to the TER reductase family. Monomer.

It catalyses the reaction a 2,3-saturated acyl-[ACP] + NAD(+) = a (2E)-enoyl-[ACP] + NADH + H(+). It participates in lipid metabolism; fatty acid biosynthesis. Its function is as follows. Involved in the final reduction of the elongation cycle of fatty acid synthesis (FAS II). Catalyzes the reduction of a carbon-carbon double bond in an enoyl moiety that is covalently linked to an acyl carrier protein (ACP). In Coxiella burnetii (strain CbuK_Q154) (Coxiella burnetii (strain Q154)), this protein is Enoyl-[acyl-carrier-protein] reductase [NADH].